We begin with the raw amino-acid sequence, 484 residues long: MEKFHAQYEMLETIGQGGCAQVKLARHRLTGTHVAVKVIVKRECWFNPVMSEAELLMMTDHPNIISLLQVIETKKKVYLIMELCEGKSLYQHIQNAGYLQEDEARPLFKQLLSAMNYCHNQGIVHRDLTPDNIMVEKDGKVKIIDFGLGTQEKPGQNHNLFCEIYPFSTPEVLFNRPYDMRKIDVWGLGVVLYFMVTGKILFDTASVEKLRKQIVAEKCSVPCRLSVELQDLIRLLMTDIPELRPTVAEVMVHPWVTEGSGVLPDPCEEHIPLKPDPAIAKAMGFIGFQAQDIEDSLCQRKFNETMASYCLLKKQILKECDRPIRAQPMNPSVTPLSSLVDAPTFHLGLRRTETEPTGLRLSDNKEVPVCGNSTSKKRERSFSGPGVLSRPINTTPTMDQTHTRTWSGPCIYSNVCTIHPNSINESTEGHISTSAEDKPVHSRGWPRGIKGWTRKIGNAMRKLCCCIPSKETSHLGQRRVCPKI.

One can recognise a Protein kinase domain in the interval 8–256; that stretch reads YEMLETIGQG…VAEVMVHPWV (249 aa). Residues 14–22 and K37 each bind ATP; that span reads IGQGGCAQV. The active-site Proton acceptor is D127. Disordered stretches follow at residues 355–400 and 426–446; these read EPTG…TMDQ and STEGHISTSAEDKPVHSRGWP. The span at 391-400 shows a compositional bias: polar residues; the sequence is PINTTPTMDQ.

The protein belongs to the protein kinase superfamily. Tyr protein kinase family. Smok subfamily. Testis-specific. Expressed in the testis from 22 days postpartum (22 dpp). Expressed late in spermiogenesis, only in Tcr-containing t-haplotypes.

The catalysed reaction is L-seryl-[protein] + ATP = O-phospho-L-seryl-[protein] + ADP + H(+). The enzyme catalyses L-threonyl-[protein] + ATP = O-phospho-L-threonyl-[protein] + ADP + H(+). Functionally, while the main function of Smoks is to control sperm motility, the role of Smok-Tcr, with reduced kinase activity, is to counterbalance a signaling impairment caused by the distorter/sterility loci, giving t-sperm an advantage in reaching the oocytes. Transmission ratio distortion also called segregation distortion is the name given to the phenomenon above-mentioned. Being associated with the T-complex, it allows males heterozygous for a complete t-haplotype to preferentially transmit the t-haplotype chromosome. The polypeptide is Sperm motility kinase Tcr mutant form (Smoktcr) (Mus musculus (Mouse)).